A 240-amino-acid chain; its full sequence is Uridylate kinase (240 aa).

13 to 16 contacts ATP; the sequence is KISG. Gly-55 lines the UMP pocket. Positions 56 and 60 each coordinate ATP. UMP is bound by residues Asp-75 and 136–143; that span reads TGNPFFTT. ATP is bound by residues Thr-163, Gln-164, Tyr-169, and Asp-172.

This sequence belongs to the UMP kinase family. As to quaternary structure, homohexamer.

It is found in the cytoplasm. It carries out the reaction UMP + ATP = UDP + ADP. It functions in the pathway pyrimidine metabolism; CTP biosynthesis via de novo pathway; UDP from UMP (UMPK route): step 1/1. With respect to regulation, inhibited by UTP. Catalyzes the reversible phosphorylation of UMP to UDP. The protein is Uridylate kinase of Paramagnetospirillum magneticum (strain ATCC 700264 / AMB-1) (Magnetospirillum magneticum).